The chain runs to 56 residues: UPF0434 protein CBUD_1597.1 (56 aa).

This sequence belongs to the UPF0434 family.

This Coxiella burnetii (strain Dugway 5J108-111) protein is UPF0434 protein CBUD_1597.1.